The following is a 370-amino-acid chain: DNA replication and repair protein RecF (370 aa).

Residue 30–37 (GDNGSGKT) coordinates ATP.

Belongs to the RecF family.

Its subcellular location is the cytoplasm. Its function is as follows. The RecF protein is involved in DNA metabolism; it is required for DNA replication and normal SOS inducibility. RecF binds preferentially to single-stranded, linear DNA. It also seems to bind ATP. This Stutzerimonas stutzeri (strain A1501) (Pseudomonas stutzeri) protein is DNA replication and repair protein RecF.